Reading from the N-terminus, the 116-residue chain is Alpha-amylase inhibitor 5 (116 aa).

Cystine bridges form between Cys4–Cys55, Cys18–Cys44, Cys27–Cys77, Cys45–Cys95, and Cys57–Cys106.

The protein belongs to the protease inhibitor I6 (cereal trypsin/alpha-amylase inhibitor) family.

It is found in the secreted. Alpha-amylase inhibitor. This chain is Alpha-amylase inhibitor 5, found in Sorghum bicolor (Sorghum).